The sequence spans 185 residues: MIDEILFEAEEHMNTSVERTRDELVNIRTGRANPAMFNGVIADYYGVPTPITQMATISVPEARMLLIKPYEMSMMNEIENAIRNSDLGVNPTNDGQVLRVTIPQLTEERRRDMAKLAKSKGEDGKIAIRNVRRKGMDQLKKIQKDGDAGEDEVQAAEKELDKVTAKYVAQVDEVVAKKEAELMEV.

This sequence belongs to the RRF family.

Its subcellular location is the cytoplasm. Its function is as follows. Responsible for the release of ribosomes from messenger RNA at the termination of protein biosynthesis. May increase the efficiency of translation by recycling ribosomes from one round of translation to another. The polypeptide is Ribosome-recycling factor (Corynebacterium diphtheriae (strain ATCC 700971 / NCTC 13129 / Biotype gravis)).